The sequence spans 481 residues: Glutamyl-tRNA(Gln) amidotransferase subunit A (481 aa).

Catalysis depends on charge relay system residues Lys-79 and Ser-154. The tract at residues 136–157 is disordered; the sequence is SAFGATKNPRNPEHVPGGSSGG. Catalysis depends on Ser-178, which acts as the Acyl-ester intermediate.

The protein belongs to the amidase family. GatA subfamily. In terms of assembly, heterotrimer of A, B and C subunits.

It catalyses the reaction L-glutamyl-tRNA(Gln) + L-glutamine + ATP + H2O = L-glutaminyl-tRNA(Gln) + L-glutamate + ADP + phosphate + H(+). Allows the formation of correctly charged Gln-tRNA(Gln) through the transamidation of misacylated Glu-tRNA(Gln) in organisms which lack glutaminyl-tRNA synthetase. The reaction takes place in the presence of glutamine and ATP through an activated gamma-phospho-Glu-tRNA(Gln). The chain is Glutamyl-tRNA(Gln) amidotransferase subunit A from Lachnospira eligens (strain ATCC 27750 / DSM 3376 / VPI C15-48 / C15-B4) (Eubacterium eligens).